The chain runs to 413 residues: D-nopaline dehydrogenase (413 aa).

The protein belongs to the lysopine/nopaline/octopine/opine/vitopine dehydrogenases family. As to quaternary structure, homotetramer.

It catalyses the reaction D-nopaline + NADP(+) + H2O = L-arginine + 2-oxoglutarate + NADPH + H(+). This is D-nopaline dehydrogenase (nos) from Agrobacterium tumefaciens (strain T37).